The primary structure comprises 191 residues: Putative zinc metalloprotease MJ0611 (191 aa).

A helical transmembrane segment spans residues 20 to 40 (AIAFIFSYPNFSILVFIISLI). His49 is a Zn(2+) binding site. Glu50 is an active-site residue. Position 53 (His53) interacts with Zn(2+). 4 consecutive transmembrane segments (helical) span residues 73–93 (LILG…PGAV), 110–130 (LAGP…MLIF), 133–153 (GSLL…LAGF), and 171–191 (PFIW…MMFW).

This sequence belongs to the peptidase M50B family. The cofactor is Zn(2+).

It is found in the cell membrane. The polypeptide is Putative zinc metalloprotease MJ0611 (Methanocaldococcus jannaschii (strain ATCC 43067 / DSM 2661 / JAL-1 / JCM 10045 / NBRC 100440) (Methanococcus jannaschii)).